A 343-amino-acid chain; its full sequence is Phosphoglycerate mutase-like protein 2 (343 aa).

The N-terminal 35 residues, 1–35 (MIHQSMTSNLSFYISSVSHLSSPLPSLSRLSLRCC), are a transit peptide targeting the chloroplast. The active-site Tele-phosphohistidine intermediate is H65. The Proton donor/acceptor role is filled by E177. The disordered stretch occupies residues 322–343 (MTNYPGTILTGEDASSDIADQK).

The protein belongs to the phosphoglycerate mutase family.

Its subcellular location is the plastid. It is found in the chloroplast. Its function is as follows. May play a role in carbohydrates metabolism. The sequence is that of Phosphoglycerate mutase-like protein 2 from Arabidopsis thaliana (Mouse-ear cress).